The sequence spans 361 residues: uncharacterized protein (361 aa).

41–48 (GPLNSGKT) provides a ligand contact to ATP.

Belongs to the archaeal ATPase family.

This is an uncharacterized protein from Methanocaldococcus jannaschii (strain ATCC 43067 / DSM 2661 / JAL-1 / JCM 10045 / NBRC 100440) (Methanococcus jannaschii).